We begin with the raw amino-acid sequence, 85 residues long: V-type proton ATPase subunit f (85 aa).

2 consecutive transmembrane segments (helical) span residues 13-33 (CTGL…LFSI) and 56-76 (CLGA…QVIV).

As to quaternary structure, V-ATPase is a heteromultimeric enzyme composed of a peripheral catalytic V1 complex (components A to H) attached to an integral membrane V0 proton pore complex (components: a, c, c', c'', d, e, f and VOA1).

The protein resides in the endoplasmic reticulum membrane. Accessory component of the V0 complex of vacuolar(H+)-ATPase (V-ATPase), a multisubunit enzyme composed of a peripheral complex (V1) that hydrolyzes ATP and a membrane integral complex (V0) that translocates protons. V-ATPase is responsible for acidifying and maintaining the pH of intracellular compartments. This is V-type proton ATPase subunit f from Schizosaccharomyces pombe (strain 972 / ATCC 24843) (Fission yeast).